Consider the following 551-residue polypeptide: Protein GPR107 (551 aa).

The signal sequence occupies residues 1–33; the sequence is MAVPVPLGRFGSFCLRLLRLLALLELLVHPVLG. Residues 40 to 262 are Extracellular-facing; that stretch reads LKDDVRHKVH…YLSAGEIPLP (223 aa). 2 N-linked (GlcNAc...) asparagine glycosylation sites follow: N64 and N209. C106 and C226 form a disulfide bridge. Residues 263–283 traverse the membrane as a helical segment; sequence KLYVSMALFFFLSGTIWIHIL. Over 284–292 the chain is Cytoplasmic; that stretch reads RKRRNDVFK. The helical transmembrane segment at 293–313 threads the bilayer; that stretch reads IHWLMAALPFTKSLSLVFHAI. The Extracellular segment spans residues 314–336; it reads DYHYISSQGFPIEGWAVVYYITH. A helical membrane pass occupies residues 337–357; the sequence is LLKGALLFITIALIGTGWAFI. Residues 358–367 are Cytoplasmic-facing; the sequence is KHILSDKDKK. The helical transmembrane segment at 368–388 threads the bilayer; that stretch reads IFMIVIPLQVLANVAYIIIES. The Extracellular segment spans residues 389–401; it reads TEEGTTEYGLWKD. A helical transmembrane segment spans residues 402–422; sequence SLFLVDLLCCGAILFPVVWSI. The Cytoplasmic segment spans residues 423 to 449; sequence RHLQEASATDGKAAINLAKLRLFRHYY. Residues 450–470 traverse the membrane as a helical segment; sequence VLIVCYIYFTRIIAFLLKFAV. At 471-475 the chain is on the extracellular side; sequence PFQWK. A helical membrane pass occupies residues 476–495; that stretch reads WLYQLLDETATLVFFVLTGY. Residues 496–551 lie on the Cytoplasmic side of the membrane; it reads KFRPASDNPYLQLSQEDDDLEMESVVTTSGVMENMKKVKKVSNGAVEPQGSWEGTA. S537 carries the post-translational modification Phosphoserine.

It belongs to the LU7TM family. In terms of processing, cleaved by FURIN to yield two fragments that remain associated via a disulfide bond.

It is found in the cell membrane. Its subcellular location is the golgi apparatus. It localises to the trans-Golgi network membrane. In terms of biological role, has been proposed to act as a receptor for neuronostatin, a peptide derived from the somatostatin/SST precursor. Involved in blood sugar regulation through the induction of glucagon in response to low glucose. The polypeptide is Protein GPR107 (Gpr107) (Mus musculus (Mouse)).